The primary structure comprises 194 residues: Endoribonuclease YbeY (194 aa).

Residues histidine 127, histidine 131, and aspartate 137 each coordinate Zn(2+). A disordered region spans residues 162–194 (PLSNDEDSAPEQDDSFDDDASDSSGGIMSGGVS). A compositionally biased stretch (acidic residues) spans 165-182 (NDEDSAPEQDDSFDDDAS).

This sequence belongs to the endoribonuclease YbeY family. Requires Zn(2+) as cofactor.

The protein resides in the cytoplasm. Single strand-specific metallo-endoribonuclease involved in late-stage 70S ribosome quality control and in maturation of the 3' terminus of the 16S rRNA. This Rhodopirellula baltica (strain DSM 10527 / NCIMB 13988 / SH1) protein is Endoribonuclease YbeY.